A 264-amino-acid polypeptide reads, in one-letter code: MKQYLALMEHILAHGAVKTDRTGTGTRSVFGYQMRFDLNQGFPLVTTKKCHLRSIIHELLWFLQGDTNVAYLHEHNVSIWDEWADDKGNLGPVYGAQWRSWPTQSGKAVDQISQIIEQIKTQPDSRRLIVSAWNVGELDKMALAPCHALFQFYVADGKLSCQLYQRSCDVFLGLPFNIASYALLTMMVAQQCDLALGDFVWTGGDTHLYSNHMEQTKLQLSREPHALPQMNILRKPESIFDYQFDDFELVNYQPHPHIKAPVAI.

DUMP is bound at residue Arg21. His51 lines the (6R)-5,10-methylene-5,6,7,8-tetrahydrofolate pocket. 126–127 contacts dUMP; the sequence is RR. The active-site Nucleophile is the Cys146. DUMP-binding positions include 166–169, Asn177, and 207–209; these read RSCD and HLY. Asp169 lines the (6R)-5,10-methylene-5,6,7,8-tetrahydrofolate pocket. Ala263 serves as a coordination point for (6R)-5,10-methylene-5,6,7,8-tetrahydrofolate.

The protein belongs to the thymidylate synthase family. Bacterial-type ThyA subfamily. Homodimer.

Its subcellular location is the cytoplasm. The catalysed reaction is dUMP + (6R)-5,10-methylene-5,6,7,8-tetrahydrofolate = 7,8-dihydrofolate + dTMP. It participates in pyrimidine metabolism; dTTP biosynthesis. Catalyzes the reductive methylation of 2'-deoxyuridine-5'-monophosphate (dUMP) to 2'-deoxythymidine-5'-monophosphate (dTMP) while utilizing 5,10-methylenetetrahydrofolate (mTHF) as the methyl donor and reductant in the reaction, yielding dihydrofolate (DHF) as a by-product. This enzymatic reaction provides an intracellular de novo source of dTMP, an essential precursor for DNA biosynthesis. The chain is Thymidylate synthase from Shewanella denitrificans (strain OS217 / ATCC BAA-1090 / DSM 15013).